A 275-amino-acid chain; its full sequence is ATP synthase subunit a (275 aa).

The next 7 helical transmembrane spans lie at 46–66 (RLML…VIAM), 104–124 (FLPV…ASII), 135–155 (IGMP…VGIK), 166–186 (SIVV…IEFI), 204–224 (MLAG…FFFV), 231–251 (IFGV…LLVI), and 252–272 (FLQA…ALHA).

This sequence belongs to the ATPase A chain family. F-type ATPases have 2 components, CF(1) - the catalytic core - and CF(0) - the membrane proton channel. CF(1) has five subunits: alpha(3), beta(3), gamma(1), delta(1), epsilon(1). CF(0) has three main subunits: a(1), b(2) and c(9-12). The alpha and beta chains form an alternating ring which encloses part of the gamma chain. CF(1) is attached to CF(0) by a central stalk formed by the gamma and epsilon chains, while a peripheral stalk is formed by the delta and b chains.

The protein localises to the cell membrane. Key component of the proton channel; it plays a direct role in the translocation of protons across the membrane. This chain is ATP synthase subunit a, found in Rhodococcus erythropolis (strain PR4 / NBRC 100887).